Here is a 465-residue protein sequence, read N- to C-terminus: ATP synthase subunit beta (465 aa).

An ATP-binding site is contributed by 154–161 (GGAGVGKT).

The protein belongs to the ATPase alpha/beta chains family. As to quaternary structure, F-type ATPases have 2 components, CF(1) - the catalytic core - and CF(0) - the membrane proton channel. CF(1) has five subunits: alpha(3), beta(3), gamma(1), delta(1), epsilon(1). CF(0) has three main subunits: a(1), b(2) and c(9-12). The alpha and beta chains form an alternating ring which encloses part of the gamma chain. CF(1) is attached to CF(0) by a central stalk formed by the gamma and epsilon chains, while a peripheral stalk is formed by the delta and b chains.

It is found in the cell inner membrane. The enzyme catalyses ATP + H2O + 4 H(+)(in) = ADP + phosphate + 5 H(+)(out). Its function is as follows. Produces ATP from ADP in the presence of a proton gradient across the membrane. The catalytic sites are hosted primarily by the beta subunits. The sequence is that of ATP synthase subunit beta from Methylobacillus flagellatus (strain ATCC 51484 / DSM 6875 / VKM B-1610 / KT).